The sequence spans 495 residues: Pleckstrin homology domain-containing family O member 2 (495 aa).

The region spanning 18–120 (TADKAGWIKK…WIKALNEGIN (103 aa)) is the PH domain. A phosphoserine mark is found at Ser165 and Ser168. The tract at residues 171 to 411 (LSRLDLDVPD…ESPQHPRLPK (241 aa)) is disordered. Positions 198–213 (QEPPRALMPPVKPSPG) are enriched in pro residues. Phosphothreonine is present on Thr233. The span at 235–244 (DSASSGANPE) shows a compositional bias: polar residues. Ser236, Ser238, Ser239, Ser274, and Ser292 each carry phosphoserine. Thr296 carries the phosphothreonine modification. Residues 324–335 (SGVDASGSSQSS) are compositionally biased toward low complexity. The span at 336 to 350 (EAPETTSPEPTQVSV) shows a compositional bias: polar residues. A Phosphoserine modification is found at Ser395. Over residues 399–411 (LLRESPQHPRLPK) the composition is skewed to basic and acidic residues. The stretch at 444 to 469 (CAESLLSQAVEQLRQATQVLQEMRDL) forms a coiled coil.

The protein is Pleckstrin homology domain-containing family O member 2 (Plekho2) of Mus musculus (Mouse).